Here is a 106-residue protein sequence, read N- to C-terminus: Large ribosomal subunit protein eL42 (106 aa).

The protein belongs to the eukaryotic ribosomal protein eL42 family.

The protein is Large ribosomal subunit protein eL42 (RPL44) of Debaryomyces hansenii (strain ATCC 36239 / CBS 767 / BCRC 21394 / JCM 1990 / NBRC 0083 / IGC 2968) (Yeast).